A 350-amino-acid chain; its full sequence is S-adenosylmethionine:tRNA ribosyltransferase-isomerase (350 aa).

Belongs to the QueA family. As to quaternary structure, monomer.

Its subcellular location is the cytoplasm. It catalyses the reaction 7-aminomethyl-7-carbaguanosine(34) in tRNA + S-adenosyl-L-methionine = epoxyqueuosine(34) in tRNA + adenine + L-methionine + 2 H(+). It functions in the pathway tRNA modification; tRNA-queuosine biosynthesis. Its function is as follows. Transfers and isomerizes the ribose moiety from AdoMet to the 7-aminomethyl group of 7-deazaguanine (preQ1-tRNA) to give epoxyqueuosine (oQ-tRNA). This Vibrio vulnificus (strain YJ016) protein is S-adenosylmethionine:tRNA ribosyltransferase-isomerase.